Consider the following 63-residue polypeptide: Bowman-Birk type proteinase inhibitor (63 aa).

Disulfide bonds link Cys-7–Cys-60, Cys-8–Cys-23, Cys-11–Cys-56, Cys-13–Cys-21, Cys-30–Cys-37, Cys-34–Cys-49, and Cys-39–Cys-47.

As to quaternary structure, monomer.

Its function is as follows. Inhibits trypsin stoichiometrically at the molar ratio of 1:2, with a dissociation constant of 4.2 nM. Does not inhibit chymotrypsin. This is Bowman-Birk type proteinase inhibitor from Lupinus albus (White lupine).